The following is a 348-amino-acid chain: Holliday junction branch migration complex subunit RuvB (348 aa).

The segment at 1 to 184 is large ATPase domain (RuvB-L); the sequence is MTLNRDMVSP…FGIVQRLEFY (184 aa). 9 residues coordinate ATP: Leu-23, Arg-24, Gly-65, Lys-68, Thr-69, Thr-70, Arg-174, Tyr-184, and Arg-221. Thr-69 serves as a coordination point for Mg(2+). Residues 185 to 255 are small ATPAse domain (RuvB-S); sequence AVDHLVLIVE…VAQKALDLLD (71 aa). The head domain (RuvB-H) stretch occupies residues 258-348; it reads SHGFDTMDRK…QEVSDLFPNE (91 aa). The DNA site is built by Arg-294, Arg-313, and Arg-318.

The protein belongs to the RuvB family. Homohexamer. Forms an RuvA(8)-RuvB(12)-Holliday junction (HJ) complex. HJ DNA is sandwiched between 2 RuvA tetramers; dsDNA enters through RuvA and exits via RuvB. An RuvB hexamer assembles on each DNA strand where it exits the tetramer. Each RuvB hexamer is contacted by two RuvA subunits (via domain III) on 2 adjacent RuvB subunits; this complex drives branch migration. In the full resolvosome a probable DNA-RuvA(4)-RuvB(12)-RuvC(2) complex forms which resolves the HJ.

The protein localises to the cytoplasm. The enzyme catalyses ATP + H2O = ADP + phosphate + H(+). In terms of biological role, the RuvA-RuvB-RuvC complex processes Holliday junction (HJ) DNA during genetic recombination and DNA repair, while the RuvA-RuvB complex plays an important role in the rescue of blocked DNA replication forks via replication fork reversal (RFR). RuvA specifically binds to HJ cruciform DNA, conferring on it an open structure. The RuvB hexamer acts as an ATP-dependent pump, pulling dsDNA into and through the RuvAB complex. RuvB forms 2 homohexamers on either side of HJ DNA bound by 1 or 2 RuvA tetramers; 4 subunits per hexamer contact DNA at a time. Coordinated motions by a converter formed by DNA-disengaged RuvB subunits stimulates ATP hydrolysis and nucleotide exchange. Immobilization of the converter enables RuvB to convert the ATP-contained energy into a lever motion, pulling 2 nucleotides of DNA out of the RuvA tetramer per ATP hydrolyzed, thus driving DNA branch migration. The RuvB motors rotate together with the DNA substrate, which together with the progressing nucleotide cycle form the mechanistic basis for DNA recombination by continuous HJ branch migration. Branch migration allows RuvC to scan DNA until it finds its consensus sequence, where it cleaves and resolves cruciform DNA. This chain is Holliday junction branch migration complex subunit RuvB, found in Nitrosococcus oceani (strain ATCC 19707 / BCRC 17464 / JCM 30415 / NCIMB 11848 / C-107).